The primary structure comprises 593 residues: Aspartate--tRNA(Asp/Asn) ligase (593 aa).

E175 serves as a coordination point for L-aspartate. An aspartate region spans residues 199–202; that stretch reads QQYK. L-aspartate is bound by residues R221 and H452. 221–223 is an ATP binding site; sequence RDE. E486 lines the ATP pocket. Position 493 (R493) interacts with L-aspartate. Position 538 to 541 (538 to 541) interacts with ATP; the sequence is GVDR.

It belongs to the class-II aminoacyl-tRNA synthetase family. Type 1 subfamily. As to quaternary structure, homodimer.

The protein resides in the cytoplasm. It catalyses the reaction tRNA(Asx) + L-aspartate + ATP = L-aspartyl-tRNA(Asx) + AMP + diphosphate. Its function is as follows. Aspartyl-tRNA synthetase with relaxed tRNA specificity since it is able to aspartylate not only its cognate tRNA(Asp) but also tRNA(Asn). Reaction proceeds in two steps: L-aspartate is first activated by ATP to form Asp-AMP and then transferred to the acceptor end of tRNA(Asp/Asn). The sequence is that of Aspartate--tRNA(Asp/Asn) ligase from Novosphingobium aromaticivorans (strain ATCC 700278 / DSM 12444 / CCUG 56034 / CIP 105152 / NBRC 16084 / F199).